The primary structure comprises 192 residues: Ion-translocating oxidoreductase complex subunit B (192 aa).

A hydrophobic region spans residues 1–26; sequence MTAIWIAIAALSALALAFGLVLGYAS. The region spanning 32–91 is the 4Fe-4S domain; the sequence is ENDPIVEEVEAMLPQSQCGQCGYPGCRPYAEAVSLNGESINKCGPGGEAMMLKLAEKLNV. [4Fe-4S] cluster-binding residues include Cys-49, Cys-52, Cys-57, Cys-74, Cys-117, Cys-120, Cys-123, Cys-127, Cys-147, Cys-150, Cys-153, and Cys-157. 4Fe-4S ferredoxin-type domains follow at residues 108-137 and 138-167; these read HVAW…GSTK and AVHT…LRPI.

Belongs to the 4Fe4S bacterial-type ferredoxin family. RnfB subfamily. The complex is composed of six subunits: RnfA, RnfB, RnfC, RnfD, RnfE and RnfG. It depends on [4Fe-4S] cluster as a cofactor.

Its subcellular location is the cell inner membrane. In terms of biological role, part of a membrane-bound complex that couples electron transfer with translocation of ions across the membrane. The polypeptide is Ion-translocating oxidoreductase complex subunit B (Pectobacterium atrosepticum (strain SCRI 1043 / ATCC BAA-672) (Erwinia carotovora subsp. atroseptica)).